A 153-amino-acid chain; its full sequence is Calmodulin-like protein 3 (153 aa).

4 consecutive EF-hand domains span residues 1 to 36 (MDQA…LGIY), 37 to 72 (IPDK…IMEE), 74 to 109 (DEEE…LGLK), and 112 to 147 (RTLE…GGFA). 19 residues coordinate Ca(2+): Asp-14, Asn-16, Asp-18, Lys-20, Glu-25, Asp-50, Asn-52, Asp-54, Tyr-56, Glu-61, Asp-87, Asn-89, Asp-91, Glu-98, Asp-125, Asp-127, Asp-129, Met-131, and Glu-136.

This sequence belongs to the calmodulin family.

Its function is as follows. Potential calcium sensor. This is Calmodulin-like protein 3 (CML3) from Arabidopsis thaliana (Mouse-ear cress).